We begin with the raw amino-acid sequence, 125 residues long: Short coiled-coil protein (125 aa).

Residues 1–31 (MSKMDGLSTGEEEDSTFTSISLEDDTDHSLK) are disordered. Residues 43–101 (KMMNADMDAVDAENQVELEEKTRLINQVLELQHTLEDLSARVDAVKEENLKLKSENQVL) are a coiled coil.

It belongs to the SCOC family. Homodimer. Interacts with ARL1, ARL2 and ARL3. Directly interacts with FEZ1 and UVRAG. The interaction with UVRAG is reduced by amino acid starvation, but the complex is stabilized in the presence of FEZ1. Interacts with NRBF2.

It is found in the golgi apparatus membrane. The protein localises to the golgi apparatus. The protein resides in the trans-Golgi network. Its subcellular location is the cytoplasm. It localises to the cytosol. In terms of biological role, positive regulator of amino acid starvation-induced autophagy. The protein is Short coiled-coil protein (Scoc) of Mus musculus (Mouse).